Here is a 430-residue protein sequence, read N- to C-terminus: Histidine--tRNA ligase, chloroplastic (430 aa).

It belongs to the class-II aminoacyl-tRNA synthetase family.

It localises to the plastid. The protein resides in the chloroplast. The enzyme catalyses tRNA(His) + L-histidine + ATP = L-histidyl-tRNA(His) + AMP + diphosphate + H(+). The protein is Histidine--tRNA ligase, chloroplastic (hisS) of Porphyra purpurea (Red seaweed).